We begin with the raw amino-acid sequence, 719 residues long: Probable 1-deoxy-D-xylulose-5-phosphate synthase, chloroplastic (719 aa).

Residues 1–57 (MALCAYAFPGILNRTVAVASDASKPTPLFSEWIHGTDLQFQFHQKLTQVKKRSRTVQ) constitute a chloroplast transit peptide. Thiamine diphosphate-binding positions include histidine 145 and 186–188 (GHS). Residue aspartate 217 coordinates Mg(2+). Thiamine diphosphate is bound by residues 218-219 (GA), asparagine 246, tyrosine 367, and glutamate 449. Asparagine 246 is a Mg(2+) binding site.

Belongs to the transketolase family. DXPS subfamily. In terms of assembly, homodimer. Mg(2+) serves as cofactor. It depends on thiamine diphosphate as a cofactor.

The protein resides in the plastid. It localises to the chloroplast. It carries out the reaction D-glyceraldehyde 3-phosphate + pyruvate + H(+) = 1-deoxy-D-xylulose 5-phosphate + CO2. Its pathway is metabolic intermediate biosynthesis; 1-deoxy-D-xylulose 5-phosphate biosynthesis; 1-deoxy-D-xylulose 5-phosphate from D-glyceraldehyde 3-phosphate and pyruvate: step 1/1. In terms of biological role, catalyzes the acyloin condensation reaction between C atoms 2 and 3 of pyruvate and glyceraldehyde 3-phosphate to yield 1-deoxy-D-xylulose-5-phosphate (DXP). The protein is Probable 1-deoxy-D-xylulose-5-phosphate synthase, chloroplastic (TKT2) of Capsicum annuum (Capsicum pepper).